We begin with the raw amino-acid sequence, 529 residues long: Peptide chain release factor 3 (529 aa).

The region spanning A11–Q279 is the tr-type G domain. GTP contacts are provided by residues S20–T27, D88–H92, and N142–D145.

It belongs to the TRAFAC class translation factor GTPase superfamily. Classic translation factor GTPase family. PrfC subfamily.

Its subcellular location is the cytoplasm. Functionally, increases the formation of ribosomal termination complexes and stimulates activities of RF-1 and RF-2. It binds guanine nucleotides and has strong preference for UGA stop codons. It may interact directly with the ribosome. The stimulation of RF-1 and RF-2 is significantly reduced by GTP and GDP, but not by GMP. This chain is Peptide chain release factor 3, found in Idiomarina loihiensis (strain ATCC BAA-735 / DSM 15497 / L2-TR).